A 246-amino-acid polypeptide reads, in one-letter code: MNDRIIEFDPLIEGVLIKRYKRFLADIKLESGDVVTAHCANTGPMKGLLTEGAKVRISVSHSPKRKLPFTWEQICVLDSKNDEVWVGINTLFANKLIKKVIAKNLLREIIGEVETIQSEIPYGKDKKSRIDFFLTPKSSNPDKRNIYIEVKNTTWIKDNIALFPDTVTKRGQKHLIELKELIPESKSVLVLCITRKDACFFAPGDEADPLYGNLFRESLSAGMIPIPCSFEFYKDHVRWNGIKPLK.

Belongs to the SfsA family.

This Prochlorococcus marinus (strain MIT 9215) protein is Sugar fermentation stimulation protein homolog.